Consider the following 178-residue polypeptide: Interleukin-10 (178 aa).

Positions 1 to 18 (MPGSALLCCLALLAGVKA) are cleaved as a signal peptide. 2 disulfides stabilise this stretch: C30–C126 and C80–C132. N-linked (GlcNAc...) asparagine glycosylation occurs at N67. N-linked (GlcNAc...) asparagine glycosylation is present at N134.

This sequence belongs to the IL-10 family. In terms of assembly, homodimer. Interacts with IL10RA and IL10RB.

The protein localises to the secreted. Major immune regulatory cytokine that acts on many cells of the immune system where it has profound anti-inflammatory functions, limiting excessive tissue disruption caused by inflammation. Mechanistically, IL10 binds to its heterotetrameric receptor comprising IL10RA and IL10RB leading to JAK1 and STAT2-mediated phosphorylation of STAT3. In turn, STAT3 translocates to the nucleus where it drives expression of anti-inflammatory mediators. Targets antigen-presenting cells (APCs) such as macrophages and monocytes and inhibits their release of pro-inflammatory cytokines including granulocyte-macrophage colony-stimulating factor /GM-CSF, granulocyte colony-stimulating factor/G-CSF, IL-1 alpha, IL-1 beta, IL-6, IL-8 and TNF-alpha. Also interferes with antigen presentation by reducing the expression of MHC-class II and co-stimulatory molecules, thereby inhibiting their ability to induce T cell activation. In addition, controls the inflammatory response of macrophages by reprogramming essential metabolic pathways including mTOR signaling. The chain is Interleukin-10 (IL10) from Cavia porcellus (Guinea pig).